The chain runs to 822 residues: DNA-directed RNA polymerase subunit beta N-terminal section (822 aa).

A disordered region spans residues 376–408; sequence ELTEGNPSSKSQTKNKTSASKKSKTLNVANTKG. Residues 383-393 show a composition bias toward low complexity; that stretch reads SSKSQTKNKTS.

Belongs to the RNA polymerase beta chain family. As to quaternary structure, in plastids the minimal PEP RNA polymerase catalytic core is composed of four subunits: alpha, beta, beta', and beta''. When a (nuclear-encoded) sigma factor is associated with the core the holoenzyme is formed, which can initiate transcription.

The protein localises to the plastid. It is found in the chloroplast. The enzyme catalyses RNA(n) + a ribonucleoside 5'-triphosphate = RNA(n+1) + diphosphate. In terms of biological role, DNA-dependent RNA polymerase catalyzes the transcription of DNA into RNA using the four ribonucleoside triphosphates as substrates. This is DNA-directed RNA polymerase subunit beta N-terminal section (rpoB1) from Chlamydomonas reinhardtii (Chlamydomonas smithii).